The primary structure comprises 562 residues: Putative transport protein PC1_1686 (562 aa).

6 helical membrane-spanning segments follow: residues 8-28 (LLNG…LCLG), 32-52 (LGPV…LLGQ), 66-86 (FMLF…SIFF), 93-113 (FMLA…LGKF), 116-136 (WGIG…PVLV), and 158-178 (HLSL…IFGA). 2 RCK C-terminal domains span residues 202–288 (LDAD…NFRD) and 292–373 (VFDR…RIGF). A run of 5 helical transmembrane segments spans residues 383–403 (LLAF…TIQF), 406–426 (FTFG…LGFL), 447–467 (FGLM…INSS), 478–498 (SGLI…AYVL), and 537–557 (GTYA…VIIW).

It belongs to the AAE transporter (TC 2.A.81) family. YbjL subfamily.

Its subcellular location is the cell membrane. This is Putative transport protein PC1_1686 from Pectobacterium carotovorum subsp. carotovorum (strain PC1).